A 579-amino-acid chain; its full sequence is uncharacterized protein (579 aa).

A disordered region spans residues 1–100 (MSGRRRNHPG…APPCGPYPGE (100 aa)). The segment covering 80–90 (GQQQSEPQHNS) has biased composition (polar residues). Transmembrane regions (helical) follow at residues 148–168 (FAVD…AAAS), 175–195 (VALY…LIGP), 206–226 (VALA…IMNY), 228–248 (GATG…MMVL), 279–299 (VFGL…VEFV), 303–323 (LFKL…GALL), 378–398 (LWGN…PAFV), 407–427 (WVQL…NFAG), 448–468 (IAVT…MTTI), 504–524 (SEST…MVYT), and 526–546 (LWVG…QTVV).

The protein to M.tuberculosis Rv0876c.

It localises to the cell membrane. This is an uncharacterized protein from Mycobacterium leprae (strain TN).